A 60-amino-acid polypeptide reads, in one-letter code: uncharacterized protein (60 aa).

The disordered stretch occupies residues 27-50; it reads VKNNNNNNNNNNNNNNNNNNNNNK. Low complexity predominate over residues 29–49; that stretch reads NNNNNNNNNNNNNNNNNNNNN.

This is an uncharacterized protein from Dictyostelium discoideum (Social amoeba).